We begin with the raw amino-acid sequence, 450 residues long: Glucose-6-phosphate isomerase (450 aa).

Residue Glu290 is the Proton donor of the active site. Active-site residues include His311 and Lys425.

This sequence belongs to the GPI family.

Its subcellular location is the cytoplasm. It carries out the reaction alpha-D-glucose 6-phosphate = beta-D-fructose 6-phosphate. It participates in carbohydrate biosynthesis; gluconeogenesis. The protein operates within carbohydrate degradation; glycolysis; D-glyceraldehyde 3-phosphate and glycerone phosphate from D-glucose: step 2/4. Its function is as follows. Catalyzes the reversible isomerization of glucose-6-phosphate to fructose-6-phosphate. The chain is Glucose-6-phosphate isomerase from Listeria innocua serovar 6a (strain ATCC BAA-680 / CLIP 11262).